Consider the following 340-residue polypeptide: MPIATPEVYNEMLDRAKAGKFAYPAINVTSSQTLNAALRGFAEAESDGIVQISTGGAEFLGGQYSKDMVTGAVALAEFAHIIAEKYPVNIALHTDHCPKDKLDGYVRPLLALSKKRVEAGLGPLFQSHMWDGSAEPLADNLAIAQELLETARAAQIILEVEITPTGGEEDGVSHEINDSLYTTVDDAIRTAEALGLGEKGRYLLAASFGNVHGVYKPGNVVLRPELLKELNEGVAARFGKESPFDFVFHGGSGSSEEEIRTALENGVVKMNLDTDTQYAFTRPVAGHMFANYDGVLKVDGEVGNKKAYDPRTWGKLAEASMAARVVEATQHLRSAGNKIK.

S53 provides a ligand contact to D-glyceraldehyde 3-phosphate. D95 (proton donor) is an active-site residue. Zn(2+) is bound by residues H96, D131, E161, and H212. G213 lines the dihydroxyacetone phosphate pocket. H249 provides a ligand contact to Zn(2+). Dihydroxyacetone phosphate contacts are provided by residues 250–252 and 271–274; these read GGS and NLDT.

It belongs to the class II fructose-bisphosphate aldolase family. Zn(2+) is required as a cofactor.

The enzyme catalyses beta-D-fructose 1,6-bisphosphate = D-glyceraldehyde 3-phosphate + dihydroxyacetone phosphate. Its pathway is carbohydrate degradation; glycolysis; D-glyceraldehyde 3-phosphate and glycerone phosphate from D-glucose: step 4/4. Its function is as follows. Catalyzes the aldol condensation of dihydroxyacetone phosphate (DHAP or glycerone-phosphate) with glyceraldehyde 3-phosphate (G3P) to form fructose 1,6-bisphosphate (FBP) in gluconeogenesis and the reverse reaction in glycolysis. The sequence is that of Fructose-bisphosphate aldolase (fba) from Streptomyces galbus.